The sequence spans 70 residues: DNA-directed RNA polymerase subunit epsilon (70 aa).

The protein belongs to the RNA polymerase subunit epsilon family. RNAP is composed of a core of 2 alpha, a beta and a beta' subunit. The core is associated with a delta subunit, and at least one of epsilon or omega. When a sigma factor is associated with the core the holoenzyme is formed, which can initiate transcription.

The catalysed reaction is RNA(n) + a ribonucleoside 5'-triphosphate = RNA(n+1) + diphosphate. Functionally, a non-essential component of RNA polymerase (RNAP). The polypeptide is DNA-directed RNA polymerase subunit epsilon (Bacillus cereus (strain ATCC 14579 / DSM 31 / CCUG 7414 / JCM 2152 / NBRC 15305 / NCIMB 9373 / NCTC 2599 / NRRL B-3711)).